Here is a 359-residue protein sequence, read N- to C-terminus: Fructose-bisphosphate aldolase (359 aa).

Serine 62 provides a ligand contact to D-glyceraldehyde 3-phosphate. The Proton donor role is filled by aspartate 109. 4 residues coordinate Zn(2+): histidine 110, aspartate 144, glutamate 174, and histidine 226. Glycine 227 is a dihydroxyacetone phosphate binding site. A Zn(2+)-binding site is contributed by histidine 265. Residues 266-268 and 287-290 contribute to the dihydroxyacetone phosphate site; these read GGS and NLDT.

Belongs to the class II fructose-bisphosphate aldolase family. In terms of assembly, homodimer. Zn(2+) serves as cofactor.

The protein localises to the cytoplasm. It carries out the reaction beta-D-fructose 1,6-bisphosphate = D-glyceraldehyde 3-phosphate + dihydroxyacetone phosphate. It functions in the pathway carbohydrate degradation; glycolysis; D-glyceraldehyde 3-phosphate and glycerone phosphate from D-glucose: step 4/4. Its function is as follows. Catalyzes the aldol condensation of dihydroxyacetone phosphate (DHAP or glycerone-phosphate) with glyceraldehyde 3-phosphate (G3P) to form fructose 1,6-bisphosphate (FBP) in gluconeogenesis and the reverse reaction in glycolysis. The chain is Fructose-bisphosphate aldolase (FBA1) from Candida albicans (strain SC5314 / ATCC MYA-2876) (Yeast).